Reading from the N-terminus, the 284-residue chain is Protoheme IX farnesyltransferase (284 aa).

A run of 8 helical transmembrane segments spans residues 13 to 33, 35 to 55, 87 to 107, 108 to 128, 133 to 153, 162 to 182, 224 to 244, and 264 to 284; these read IIIG…FPFF, VFLF…SCIF, IFAS…VNIL, SMFL…FFLK, YSTF…HTAI, FLLF…IAIL, FLGY…FYWL, and FYYS…DFIF.

It belongs to the UbiA prenyltransferase family. Protoheme IX farnesyltransferase subfamily.

The protein resides in the cell membrane. The enzyme catalyses heme b + (2E,6E)-farnesyl diphosphate + H2O = Fe(II)-heme o + diphosphate. The protein operates within porphyrin-containing compound metabolism; heme O biosynthesis; heme O from protoheme: step 1/1. Functionally, converts heme B (protoheme IX) to heme O by substitution of the vinyl group on carbon 2 of heme B porphyrin ring with a hydroxyethyl farnesyl side group. In Buchnera aphidicola subsp. Schizaphis graminum (strain Sg), this protein is Protoheme IX farnesyltransferase.